Here is a 142-residue protein sequence, read N- to C-terminus: Large ribosomal subunit protein uL13 (142 aa).

This sequence belongs to the universal ribosomal protein uL13 family. In terms of assembly, part of the 50S ribosomal subunit.

In terms of biological role, this protein is one of the early assembly proteins of the 50S ribosomal subunit, although it is not seen to bind rRNA by itself. It is important during the early stages of 50S assembly. The polypeptide is Large ribosomal subunit protein uL13 (Pelobacter propionicus (strain DSM 2379 / NBRC 103807 / OttBd1)).